A 388-amino-acid chain; its full sequence is 4-hydroxy-3-methylbut-2-en-1-yl diphosphate synthase (flavodoxin) (388 aa).

Residues 1–22 (MTSVNLGMPAAPQPVLSPRRKT) form a disordered region. Residues C281, C284, C316, and E323 each contribute to the [4Fe-4S] cluster site.

This sequence belongs to the IspG family. [4Fe-4S] cluster is required as a cofactor.

It catalyses the reaction (2E)-4-hydroxy-3-methylbut-2-enyl diphosphate + oxidized [flavodoxin] + H2O + 2 H(+) = 2-C-methyl-D-erythritol 2,4-cyclic diphosphate + reduced [flavodoxin]. It participates in isoprenoid biosynthesis; isopentenyl diphosphate biosynthesis via DXP pathway; isopentenyl diphosphate from 1-deoxy-D-xylulose 5-phosphate: step 5/6. Converts 2C-methyl-D-erythritol 2,4-cyclodiphosphate (ME-2,4cPP) into 1-hydroxy-2-methyl-2-(E)-butenyl 4-diphosphate. This chain is 4-hydroxy-3-methylbut-2-en-1-yl diphosphate synthase (flavodoxin), found in Kocuria rhizophila (strain ATCC 9341 / DSM 348 / NBRC 103217 / DC2201).